A 517-amino-acid polypeptide reads, in one-letter code: UPF0522 protein B (517 aa).

The first 19 residues, 1–19 (MNKTIILLLISIIFEIVIS), serve as a signal peptide directing secretion. N148, N245, N333, N345, N370, N423, N432, and N495 each carry an N-linked (GlcNAc...) asparagine glycan.

Belongs to the UPF0522 family.

The protein resides in the secreted. This Dictyostelium discoideum (Social amoeba) protein is UPF0522 protein B.